Reading from the N-terminus, the 485-residue chain is Cobyric acid synthase (485 aa).

The GATase cobBQ-type domain maps to 248–435; it reads VLKVVVPVLP…LHGLFESPDA (188 aa). The active-site Nucleophile is Cys329. His427 is a catalytic residue.

It belongs to the CobB/CobQ family. CobQ subfamily.

It participates in cofactor biosynthesis; adenosylcobalamin biosynthesis. Its function is as follows. Catalyzes amidations at positions B, D, E, and G on adenosylcobyrinic A,C-diamide. NH(2) groups are provided by glutamine, and one molecule of ATP is hydrogenolyzed for each amidation. The protein is Cobyric acid synthase of Stutzerimonas stutzeri (strain A1501) (Pseudomonas stutzeri).